Reading from the N-terminus, the 689-residue chain is DNA ligase (689 aa).

NAD(+)-binding positions include 40–44 (DSEYD), 89–90 (SL), and glutamate 121. Lysine 123 (N6-AMP-lysine intermediate) is an active-site residue. NAD(+)-binding residues include arginine 144, glutamate 179, lysine 295, and lysine 319. 4 residues coordinate Zn(2+): cysteine 413, cysteine 416, cysteine 431, and cysteine 437. In terms of domain architecture, BRCT spans 610 to 689 (REQNILTGKI…VEWLAFIKNA (80 aa)).

It belongs to the NAD-dependent DNA ligase family. LigA subfamily. Mg(2+) serves as cofactor. The cofactor is Mn(2+).

The catalysed reaction is NAD(+) + (deoxyribonucleotide)n-3'-hydroxyl + 5'-phospho-(deoxyribonucleotide)m = (deoxyribonucleotide)n+m + AMP + beta-nicotinamide D-nucleotide.. Functionally, DNA ligase that catalyzes the formation of phosphodiester linkages between 5'-phosphoryl and 3'-hydroxyl groups in double-stranded DNA using NAD as a coenzyme and as the energy source for the reaction. It is essential for DNA replication and repair of damaged DNA. In Rickettsia prowazekii (strain Madrid E), this protein is DNA ligase.